Reading from the N-terminus, the 475-residue chain is MPREIITLQVGQCGNQIGMEFWKQLCLEHGISKDGILEDFATQGGDRKDVFFYQADDEHYIPRALLIDLEPRVINSIQNSEYRNLYNHENVFVADHGGGAGNNWASGYHQGEQVEEDIMDMIDREADGSDSLEGFVLCHSIAGGTGSGMGSYLLEALNDRYSKKLVQTYSVFPNQMETSDVVVQPYNSLLTLKRLTLNADCVVVLDNTALNRIAVDRLHIPNPTFAQTNSLVSTVMSASTTTLRYPGYMNNDLVGLVASLIPTPRCHFLMTGYTPLTVERQANAIRKTTVLDVMRRLLQAKNIMVSSYARTKEASQAKYISILNIIQGEVDPTQVHKSLQRIRERKLANFIEWGPASIQVALSRKSPYVQTAHRVSGLMLASHTSIRHLFSKCISQYEKLRKKQAFLDNYRKFPMFADNDLSEFDESREIVQNLVDEYKACESADYIKWGMEDRGKQVSGEGNTSGTVDSRVGAS.

A GTP-binding site is contributed by 142 to 148 (AGGTGSG). The disordered stretch occupies residues 455-475 (GKQVSGEGNTSGTVDSRVGAS).

The protein belongs to the tubulin family.

Its subcellular location is the cytoplasm. The protein resides in the cytoskeleton. It localises to the microtubule organizing center. Tubulin is the major constituent of microtubules. The gamma chain is found at microtubule organizing centers (MTOC) such as the spindle poles, suggesting that it is involved in the minus-end nucleation of microtubule assembly. This is Tubulin gamma chain (TUBG1) from Physcomitrium patens (Spreading-leaved earth moss).